A 153-amino-acid chain; its full sequence is Xanthine-guanine phosphoribosyltransferase (153 aa).

5-phospho-alpha-D-ribose 1-diphosphate is bound by residues Arg-37 to Gly-38 and Asp-89 to Thr-97. A Mg(2+)-binding site is contributed by Asp-90. Guanine contacts are provided by Asp-93 and Ile-136. Asp-93 and Ile-136 together coordinate xanthine. Residues Asp-93 to Thr-97 and Trp-135 to Ile-136 each bind GMP.

This sequence belongs to the purine/pyrimidine phosphoribosyltransferase family. XGPT subfamily. As to quaternary structure, homotetramer. Requires Mg(2+) as cofactor.

It localises to the cell inner membrane. It catalyses the reaction GMP + diphosphate = guanine + 5-phospho-alpha-D-ribose 1-diphosphate. The enzyme catalyses XMP + diphosphate = xanthine + 5-phospho-alpha-D-ribose 1-diphosphate. The catalysed reaction is IMP + diphosphate = hypoxanthine + 5-phospho-alpha-D-ribose 1-diphosphate. It functions in the pathway purine metabolism; GMP biosynthesis via salvage pathway; GMP from guanine: step 1/1. It participates in purine metabolism; XMP biosynthesis via salvage pathway; XMP from xanthine: step 1/1. In terms of biological role, purine salvage pathway enzyme that catalyzes the transfer of the ribosyl-5-phosphate group from 5-phospho-alpha-D-ribose 1-diphosphate (PRPP) to the N9 position of the 6-oxopurines guanine and xanthine to form the corresponding ribonucleotides GMP (guanosine 5'-monophosphate) and XMP (xanthosine 5'-monophosphate), with the release of PPi. To a lesser extent, also acts on hypoxanthine. The sequence is that of Xanthine-guanine phosphoribosyltransferase from Pasteurella multocida (strain Pm70).